We begin with the raw amino-acid sequence, 165 residues long: Peptide deformylase (165 aa).

Fe cation-binding residues include cysteine 88 and histidine 130. The active site involves glutamate 131. Histidine 134 is a Fe cation binding site.

Belongs to the polypeptide deformylase family. Fe(2+) serves as cofactor.

The catalysed reaction is N-terminal N-formyl-L-methionyl-[peptide] + H2O = N-terminal L-methionyl-[peptide] + formate. Its function is as follows. Removes the formyl group from the N-terminal Met of newly synthesized proteins. Requires at least a dipeptide for an efficient rate of reaction. N-terminal L-methionine is a prerequisite for activity but the enzyme has broad specificity at other positions. This is Peptide deformylase from Borreliella burgdorferi (strain ATCC 35210 / DSM 4680 / CIP 102532 / B31) (Borrelia burgdorferi).